A 740-amino-acid chain; its full sequence is Catalase-peroxidase (740 aa).

A disordered region spans residues 1–32; the sequence is MPEDRPIEDSPPIGEAQTDAPAGGCPAGFGRI. Residues 113–237 constitute a cross-link (tryptophyl-tyrosyl-methioninium (Trp-Tyr) (with M-263)); that stretch reads WHAAGTYRVS…LAAVQMGLIY (125 aa). The active-site Proton acceptor is the H114. Residues 237-263 constitute a cross-link (tryptophyl-tyrosyl-methioninium (Tyr-Met) (with W-113)); the sequence is YVNPEGPNGNPDPQASAIDIRETFGRM. H278 contacts heme b.

Belongs to the peroxidase family. Peroxidase/catalase subfamily. As to quaternary structure, homodimer or homotetramer. It depends on heme b as a cofactor. Formation of the three residue Trp-Tyr-Met cross-link is important for the catalase, but not the peroxidase activity of the enzyme.

It catalyses the reaction H2O2 + AH2 = A + 2 H2O. The enzyme catalyses 2 H2O2 = O2 + 2 H2O. Functionally, bifunctional enzyme with both catalase and broad-spectrum peroxidase activity. May play a role in the intracellular survival of mycobacteria. In Mycolicibacterium smegmatis (Mycobacterium smegmatis), this protein is Catalase-peroxidase.